The sequence spans 150 residues: Large ribosomal subunit protein bL9 (150 aa).

It belongs to the bacterial ribosomal protein bL9 family.

In terms of biological role, binds to the 23S rRNA. The sequence is that of Large ribosomal subunit protein bL9 from Streptococcus agalactiae serotype III (strain NEM316).